A 1093-amino-acid polypeptide reads, in one-letter code: MPGVIMDNATTGRPGHAPDTQTPSNGDNLRNGSFHINGAAKGDKDHDPDKESYAGKPRIDGHRALPEIPHITQGFFPFSTLVNRSVQQCWNELSDLITELAAIHVSPHSSVPLLPVNGKSPGNQSPENVQKKLRILDFAHAKRAEFIKLLVLSQWSRRARDVSKLIDLQNFIRARHQAFVDALQRVGEMKRDLVQAQVANPDLQTALEILSKGRLESLADLGYKSSKLLTARGALRRLHKINRIISARLALHDLIPHPFRTYRVHDGRVTFVVRGEFELDLSIGAESELSQFFFVDIRFLYSPSSNIPKGRMSNEIDAKINEKLRDSGLTGCFNFLHGLVLTNKIHILFKQAIELAKGLWSETLRVELLHRTLVIQYWTLKPGPKSWIEIGVKSGNGDADSQGLGVPCLGLRWMRDGQEVNSRDIEFDPEDLSMECLLRSVIALHISYLLSSAYGILSEYSLFSSGTLSSHAILNVTEPGECQLSVQLTGSRHLRVSIEPMSGAVILSATPGLLERFESDASLDRSTIDDLVARVSRLRCIAAIEELESNVRILGFETVSPKGLRNDIRKVFPANVLRFSLFWHPLWERNWVVAATSSITSDNWWVVRLRRSSEVATDFSVSDTSVPLCSGHSMSDTFLATSHQTRSSSFPDLGYCLSGMVAIYANVSYLSDLHSVEFHPPLCALKVESDLQIPDIFIRYQVSNLPRALQLVLPAGLKRKNLLKDTVRLAFHGIDRHKNSAIFVAYGNLVGPWTDLCTLISKSDSSLVFKQGGSGFALRLLAPAGRPVIVQLFKSLQTLECTLSILDFLRQRRLTPQSLSLTHIAFAYGPGRDLSATIEMGLSEVPSSAELDPVRVLARTDPLLCLTLGIRFKHPNPHRRVQGSLAAILNHASNEAGLDFVTEVLSFTLPLMRALEQITSNASRQEPFRLQVIVRNAYTFLLHYTYQGFRFQLTTRQHSGQLTWVLRELSSPEAGPGHDQFKARLRGTLYHSKGNGWKGLGNGVVADAEGVSNVIRALDGCFTGAQHNTWLPRETKSEQDYSTQPAPENQSQTGAPSQAGMANDTKMTANFVNDKSLQRNPVVSNAADVITID.

Disordered regions lie at residues 1–62 (MPGV…IDGH) and 1034–1065 (ETKS…ANDT). The span at 19–31 (DTQTPSNGDNLRN) shows a compositional bias: polar residues. Positions 41-62 (KGDKDHDPDKESYAGKPRIDGH) are enriched in basic and acidic residues. The span at 1040–1056 (DYSTQPAPENQSQTGAP) shows a compositional bias: polar residues.

The protein belongs to the Mediator complex subunit 14 family. In terms of assembly, component of the Mediator complex.

Its subcellular location is the nucleus. In terms of biological role, component of the Mediator complex, a coactivator involved in the regulated transcription of nearly all RNA polymerase II-dependent genes. Mediator functions as a bridge to convey information from gene-specific regulatory proteins to the basal RNA polymerase II transcription machinery. Mediator is recruited to promoters by direct interactions with regulatory proteins and serves as a scaffold for the assembly of a functional preinitiation complex with RNA polymerase II and the general transcription factors. This Aspergillus fumigatus (strain ATCC MYA-4609 / CBS 101355 / FGSC A1100 / Af293) (Neosartorya fumigata) protein is Mediator of RNA polymerase II transcription subunit 14 (rgr1).